Consider the following 103-residue polypeptide: Conantokin-Br (103 aa).

Residues 1–21 form the signal peptide; sequence MQLYTYLYLLVPLVTFHLILG. Residues 22 to 79 constitute a propeptide that is removed on maturation; it reads TGTLDHGGALTERRSTDATALKPEPVLQKSAARSTDDNGKDRLTQMKRILKKRGKNAR. The segment at 34–64 is disordered; that stretch reads RRSTDATALKPEPVLQKSAARSTDDNGKDRL. The segment covering 55–64 has biased composition (basic and acidic residues); sequence STDDNGKDRL. Residues Glu82, Glu83, Glu89, and Glu93 each carry the 4-carboxyglutamate modification. 2 residues coordinate a divalent metal cation: Glu89 and Glu93.

It belongs to the conotoxin B superfamily. Ca(2+) serves as cofactor. It depends on Mg(2+) as a cofactor. In terms of tissue distribution, expressed by the venom duct.

The protein resides in the secreted. Its function is as follows. Conantokins inhibit N-methyl-D-aspartate (NMDA) receptors. This toxin inhibits NR2 subunits N-methyl-D-aspartate (NMDA) receptor-mediated calcium influx in central nervous system neurons in the following order of preference: NR2B/GRIN2B (IC(50)=0.14 uM), NR2D/GRIN2D (IC(50)=0.31 uM), NR2A/GRIN2A (IC(50)=0.68 uM) and NR2C/GRIN2A (IC(50)=4.9 uM), when tested on rat receptors. This is Conantokin-Br from Conus sulcatus (Sulcate cone).